A 395-amino-acid polypeptide reads, in one-letter code: MPNFVATSLKNLKFPFGADGVEFLWSAKAGDESLIYTKTGKKEFFLLVKDKKTEFVVKSDKLTRPASLGTIQKALSVYKDLNVLDLKSSTIAIKNEKQLAKKEFILNDIQFLEKLKSGEFKKIFVEIGFGSGRHLLYQAKTDENTLVVGIEVYKRSCEQVNNLALSMGLKNVILLNLDARLVMSLLHSNSVDRLFLHFPVPWEKSEKRRVVSAEFANECQRVLKSGGSFELRSDDKNYTDFTISCFLNLKEAKMEIYKNRFLDVSSKYEDRWIKQNRDIYDVVFTNLIVSEQKVLHGDFEFGTVLEEDILSKFENKTIKKDDYFIHMERIYKKDSSEKNGGLLLRVAFGSFYRPEHCFILVENSKASYFIKKPLLTYENLKAHSTLKEYLSCSTS.

Residues Glu-126, Glu-151, and Asp-178 each contribute to the S-adenosyl-L-methionine site. Residues Lys-204 and Asp-234 each coordinate substrate.

The protein belongs to the class I-like SAM-binding methyltransferase superfamily. TrmB family.

The enzyme catalyses guanosine(46) in tRNA + S-adenosyl-L-methionine = N(7)-methylguanosine(46) in tRNA + S-adenosyl-L-homocysteine. It functions in the pathway tRNA modification; N(7)-methylguanine-tRNA biosynthesis. Catalyzes the formation of N(7)-methylguanine at position 46 (m7G46) in tRNA. The sequence is that of tRNA (guanine-N(7)-)-methyltransferase from Campylobacter fetus subsp. fetus (strain 82-40).